Consider the following 108-residue polypeptide: UPF0145 protein Tery_3795 (108 aa).

This sequence belongs to the UPF0145 family.

The polypeptide is UPF0145 protein Tery_3795 (Trichodesmium erythraeum (strain IMS101)).